A 184-amino-acid polypeptide reads, in one-letter code: Photosystem I assembly protein Ycf4 (184 aa).

2 helical membrane-spanning segments follow: residues 22–42 and 57–77; these read FCWAFILFLGSLGFLLVGISS and IIFFPQGIVMSFYGIAGLFIS.

The protein belongs to the Ycf4 family.

The protein localises to the plastid. The protein resides in the chloroplast thylakoid membrane. Its function is as follows. Seems to be required for the assembly of the photosystem I complex. In Ipomoea purpurea (Common morning glory), this protein is Photosystem I assembly protein Ycf4.